Here is a 248-residue protein sequence, read N- to C-terminus: PF03932 family protein CutC (248 aa).

It belongs to the CutC family. In terms of assembly, homodimer.

It localises to the cytoplasm. The chain is PF03932 family protein CutC from Escherichia coli O45:K1 (strain S88 / ExPEC).